The sequence spans 208 residues: uncharacterized protein (208 aa).

Disordered stretches follow at residues phenylalanine 74 to proline 117 and glutamate 181 to lysine 208. The segment covering leucine 184–lysine 208 has biased composition (polar residues).

This is an uncharacterized protein from Mus musculus (Mouse).